The chain runs to 179 residues: ADP-ribosylation factor (179 aa).

G2 carries N-myristoyl glycine lipidation. Residues 24-31, 67-71, and 126-129 contribute to the GTP site; these read GLDAAGKT, DVGGQ, and NKQD.

Belongs to the small GTPase superfamily. Arf family.

It is found in the golgi apparatus. Functionally, GTP-binding protein involved in protein trafficking; may modulate vesicle budding and uncoating within the Golgi apparatus. This chain is ADP-ribosylation factor (ARF1), found in Candida albicans (strain SC5314 / ATCC MYA-2876) (Yeast).